A 624-amino-acid chain; its full sequence is Protein FAM234B (624 aa).

The interval 1–91 is disordered; that stretch reads MATVLSRALK…GFPSEPLGGL (91 aa). Ser16 carries the post-translational modification Phosphoserine. Thr26 carries the post-translational modification Phosphothreonine. 3 positions are modified to phosphoserine: Ser30, Ser33, and Ser63. A helical membrane pass occupies residues 107–127; that stretch reads VFLLTLVISMVLVLLCAFLIP.

This sequence belongs to the FAM234 family.

The protein localises to the membrane. It localises to the golgi outpost. It is found in the cytoplasm. The protein resides in the cytoskeleton. Its subcellular location is the microtubule organizing center. The sequence is that of Protein FAM234B from Mus musculus (Mouse).